A 139-amino-acid polypeptide reads, in one-letter code: Protein Turandot B (139 aa).

A signal peptide spans 1–21 (MNFKTALICFALLLIGTLCSA).

This sequence belongs to the Turandot family.

The protein localises to the secreted. In terms of biological role, a humoral factor that may play a role in stress tolerance. The polypeptide is Protein Turandot B (Drosophila simulans (Fruit fly)).